The following is a 178-amino-acid chain: ATP synthase subunit delta (178 aa).

Belongs to the ATPase delta chain family. In terms of assembly, F-type ATPases have 2 components, F(1) - the catalytic core - and F(0) - the membrane proton channel. F(1) has five subunits: alpha(3), beta(3), gamma(1), delta(1), epsilon(1). F(0) has three main subunits: a(1), b(2) and c(10-14). The alpha and beta chains form an alternating ring which encloses part of the gamma chain. F(1) is attached to F(0) by a central stalk formed by the gamma and epsilon chains, while a peripheral stalk is formed by the delta and b chains.

It localises to the cell inner membrane. In terms of biological role, f(1)F(0) ATP synthase produces ATP from ADP in the presence of a proton or sodium gradient. F-type ATPases consist of two structural domains, F(1) containing the extramembraneous catalytic core and F(0) containing the membrane proton channel, linked together by a central stalk and a peripheral stalk. During catalysis, ATP synthesis in the catalytic domain of F(1) is coupled via a rotary mechanism of the central stalk subunits to proton translocation. Functionally, this protein is part of the stalk that links CF(0) to CF(1). It either transmits conformational changes from CF(0) to CF(1) or is implicated in proton conduction. This chain is ATP synthase subunit delta, found in Hahella chejuensis (strain KCTC 2396).